The following is a 318-amino-acid chain: Elongation factor Ts, mitochondrial (318 aa).

The N-terminal 18 residues, 1–18 (MLLQRFFTRALHSTRQLY), are a transit peptide targeting the mitochondrion.

Belongs to the EF-Ts family.

The protein localises to the mitochondrion. Its function is as follows. Associates with the EF-Tu.GDP complex and induces the exchange of GDP to GTP. It remains bound to the aminoacyl-tRNA.EF-Tu.GTP complex up to the GTP hydrolysis stage on the ribosome. This chain is Elongation factor Ts, mitochondrial, found in Drosophila melanogaster (Fruit fly).